The chain runs to 472 residues: MAGKTLYDKLWDAHLVAEREDGSALIYIDRQIIHEVTSPQAFEGLRLAGRQPWRTSASVATIDHNVPTTPFNSAADITDETSRIQVQTLENNTREFGITEFGIGDVRQGIVHVMAPEQGAVVPGMTVVCGDSHTSTNGALACLAHGIGTSEVEHVLATQTLVAKKMNNMRVSVEGELGPGVTAKDVVLHIIGVIGTAGGTGYALEFAGSAMRSLSMEGRMTVCNMAIEAGARAGMVAVDDVTIDYVKGRPFAPKGADWDKAEAYWRTLVSDADAQFDQQVDIDAADIKPQVSWGTSPEMVVPVDAHLPDPAAETDEVKRSGMTRAYEYMGLTPGMPVTEIKVDRVFIGSCTNSRIEDLRAAAEVAKGRQKAGSVKQVLVVPGSGLVKQQAEKEGLDKIFVEAGFEWREPGCSMCLAMNPDRLEAGEHCASTSNRNFEGRQGNGGRTHLVSPAMAAAAAVAGHFVDIRELDQA.

Cys350, Cys411, and Cys414 together coordinate [4Fe-4S] cluster.

The protein belongs to the aconitase/IPM isomerase family. LeuC type 1 subfamily. In terms of assembly, heterodimer of LeuC and LeuD. [4Fe-4S] cluster serves as cofactor.

The catalysed reaction is (2R,3S)-3-isopropylmalate = (2S)-2-isopropylmalate. The protein operates within amino-acid biosynthesis; L-leucine biosynthesis; L-leucine from 3-methyl-2-oxobutanoate: step 2/4. Catalyzes the isomerization between 2-isopropylmalate and 3-isopropylmalate, via the formation of 2-isopropylmaleate. The polypeptide is 3-isopropylmalate dehydratase large subunit (Alcanivorax borkumensis (strain ATCC 700651 / DSM 11573 / NCIMB 13689 / SK2)).